A 239-amino-acid chain; its full sequence is Large ribosomal subunit protein uL2 (239 aa).

The tract at residues 203–239 (PFGGKEHHPGKPTTTSRRAPPGRKVGHIAARRTGRRK) is disordered. Basic residues predominate over residues 222–239 (PPGRKVGHIAARRTGRRK).

Belongs to the universal ribosomal protein uL2 family. As to quaternary structure, part of the 50S ribosomal subunit. Forms a bridge to the 30S subunit in the 70S ribosome.

One of the primary rRNA binding proteins. Required for association of the 30S and 50S subunits to form the 70S ribosome, for tRNA binding and peptide bond formation. It has been suggested to have peptidyltransferase activity; this is somewhat controversial. Makes several contacts with the 16S rRNA in the 70S ribosome. This chain is Large ribosomal subunit protein uL2, found in Pyrococcus abyssi (strain GE5 / Orsay).